The following is a 207-amino-acid chain: 2,3-bisphosphoglycerate-dependent phosphoglycerate mutase (207 aa).

Residues 10–17, 23–24, arginine 62, 89–92, lysine 100, 116–117, and 160–161 contribute to the substrate site; these read RHGQSEWN, TG, ERDY, RR, and GN. Histidine 11 serves as the catalytic Tele-phosphohistidine intermediate. Glutamate 89 serves as the catalytic Proton donor/acceptor.

The protein belongs to the phosphoglycerate mutase family. BPG-dependent PGAM subfamily. Homodimer.

The enzyme catalyses (2R)-2-phosphoglycerate = (2R)-3-phosphoglycerate. Its pathway is carbohydrate degradation; glycolysis; pyruvate from D-glyceraldehyde 3-phosphate: step 3/5. Catalyzes the interconversion of 2-phosphoglycerate and 3-phosphoglycerate. This Xanthobacter autotrophicus (strain ATCC BAA-1158 / Py2) protein is 2,3-bisphosphoglycerate-dependent phosphoglycerate mutase.